The sequence spans 890 residues: Alanine--tRNA ligase (890 aa).

Zn(2+)-binding residues include His-573, His-577, Cys-675, and His-679.

The protein belongs to the class-II aminoacyl-tRNA synthetase family. Requires Zn(2+) as cofactor.

The protein resides in the cytoplasm. It carries out the reaction tRNA(Ala) + L-alanine + ATP = L-alanyl-tRNA(Ala) + AMP + diphosphate. Its function is as follows. Catalyzes the attachment of alanine to tRNA(Ala) in a two-step reaction: alanine is first activated by ATP to form Ala-AMP and then transferred to the acceptor end of tRNA(Ala). Also edits incorrectly charged Ser-tRNA(Ala) and Gly-tRNA(Ala) via its editing domain. This chain is Alanine--tRNA ligase, found in Streptomyces avermitilis (strain ATCC 31267 / DSM 46492 / JCM 5070 / NBRC 14893 / NCIMB 12804 / NRRL 8165 / MA-4680).